An 83-amino-acid chain; its full sequence is Small ribosomal subunit protein bS16 (83 aa).

The protein belongs to the bacterial ribosomal protein bS16 family.

The chain is Small ribosomal subunit protein bS16 from Finegoldia magna (strain ATCC 29328 / DSM 20472 / WAL 2508) (Peptostreptococcus magnus).